Consider the following 36-residue polypeptide: Mu/omega-theraphotoxin-Pmu1a (36 aa).

Cystine bridges form between C2–C16, C9–C21, and C15–C29.

It belongs to the neurotoxin 10 (Hwtx-1) family. As to expression, expressed by the venom gland.

It localises to the secreted. In terms of biological role, gating-modifier toxin that targets both voltage-gated sodium and calcium channels, with described activities on human Nav1.7/SCN9A (IC(50)=5.5-7 nM), hNav1.6/SCN10A (IC(50)=9.9 nM), hNav1.4/SCN4A (IC(50)=62.9 nM), hCav3.2/CACNA1H (IC(50)=955.4 nM or 63.5% inhibition at 10 uM), hCav3.1/CACNA1G (95.1% inhibition at 10 uM), hCav3.3/CACNA1I (90.8% inhibition at 10 uM). Acts on Cav3 currents mainly by inducing a strong depolarizing shift in the current-voltage curve. In Pterinochilus murinus (Mombasa golden starburst baboon spider), this protein is Mu/omega-theraphotoxin-Pmu1a.